The chain runs to 29 residues: Bacteriocin (29 aa).

It localises to the secreted. Its function is as follows. Has antibacterial activity against strains of L.monocytogenes, L.lactis, B.subtilis, S.typhi, S.aureus, C.perfringens, E.aerogenes and M.luteus but not against E.coli, S.sonnei, S.pneumoniae, S.faecalis, P.aeruginosa, K.pneumoniae or P.vulgaris. The protein is Bacteriocin of Lactococcus lactis subsp. lactis (Streptococcus lactis).